The sequence spans 436 residues: Adenosylhomocysteinase (436 aa).

Positions 62, 136, and 161 each coordinate substrate. 162–164 (TTT) contributes to the NAD(+) binding site. Lys-191 and Asp-195 together coordinate substrate. NAD(+) is bound by residues Asn-196, 225–230 (GFGDVG), Glu-248, Asn-283, 304–306 (IGH), and Asn-352.

This sequence belongs to the adenosylhomocysteinase family. NAD(+) is required as a cofactor.

It is found in the cytoplasm. It catalyses the reaction S-adenosyl-L-homocysteine + H2O = L-homocysteine + adenosine. It functions in the pathway amino-acid biosynthesis; L-homocysteine biosynthesis; L-homocysteine from S-adenosyl-L-homocysteine: step 1/1. In terms of biological role, may play a key role in the regulation of the intracellular concentration of adenosylhomocysteine. In Leptospira borgpetersenii serovar Hardjo-bovis (strain JB197), this protein is Adenosylhomocysteinase.